The sequence spans 444 residues: ATP-dependent protease ATPase subunit HslU (444 aa).

ATP contacts are provided by residues Ile-18 and 60-65; that span reads GVGKTE. The segment at 143 to 163 is disordered; the sequence is WGEVESHDSHSSTRQAFRKKL. Asp-257, Glu-322, and Arg-394 together coordinate ATP.

Belongs to the ClpX chaperone family. HslU subfamily. In terms of assembly, a double ring-shaped homohexamer of HslV is capped on each side by a ring-shaped HslU homohexamer. The assembly of the HslU/HslV complex is dependent on binding of ATP.

The protein resides in the cytoplasm. Its function is as follows. ATPase subunit of a proteasome-like degradation complex; this subunit has chaperone activity. The binding of ATP and its subsequent hydrolysis by HslU are essential for unfolding of protein substrates subsequently hydrolyzed by HslV. HslU recognizes the N-terminal part of its protein substrates and unfolds these before they are guided to HslV for hydrolysis. The polypeptide is ATP-dependent protease ATPase subunit HslU (Haemophilus influenzae (strain PittEE)).